Here is a 250-residue protein sequence, read N- to C-terminus: Ribonuclease 3 (250 aa).

Residues 1-15 show a composition bias toward basic residues; that stretch reads MTKTPAKKKRARSSK. The segment at 1-21 is disordered; the sequence is MTKTPAKKKRARSSKAKGTDA. The RNase III domain occupies 22–150; sequence NAALEARIGH…VIGAIFLDGG (129 aa). Glu-63 contacts Mg(2+). Asp-67 is a catalytic residue. Mg(2+) is bound by residues Asp-136 and Glu-139. Glu-139 is an active-site residue. Residues 175-244 form the DRBM domain; it reads DPKTVLQEWA…ASVMIEREGV (70 aa).

Belongs to the ribonuclease III family. Homodimer. Requires Mg(2+) as cofactor.

The protein resides in the cytoplasm. It carries out the reaction Endonucleolytic cleavage to 5'-phosphomonoester.. In terms of biological role, digests double-stranded RNA. Involved in the processing of primary rRNA transcript to yield the immediate precursors to the large and small rRNAs (23S and 16S). Processes some mRNAs, and tRNAs when they are encoded in the rRNA operon. Processes pre-crRNA and tracrRNA of type II CRISPR loci if present in the organism. This is Ribonuclease 3 from Bradyrhizobium diazoefficiens (strain JCM 10833 / BCRC 13528 / IAM 13628 / NBRC 14792 / USDA 110).